A 77-amino-acid polypeptide reads, in one-letter code: Acyl carrier protein (77 aa).

The Carrier domain occupies 2 to 77 (SDIADRVKKI…DAVKFIQGAV (76 aa)). S37 carries the O-(pantetheine 4'-phosphoryl)serine modification.

It belongs to the acyl carrier protein (ACP) family. In terms of processing, 4'-phosphopantetheine is transferred from CoA to a specific serine of apo-ACP by AcpS. This modification is essential for activity because fatty acids are bound in thioester linkage to the sulfhydryl of the prosthetic group.

The protein localises to the cytoplasm. The protein operates within lipid metabolism; fatty acid biosynthesis. In terms of biological role, carrier of the growing fatty acid chain in fatty acid biosynthesis. The polypeptide is Acyl carrier protein (Paracoccus denitrificans (strain Pd 1222)).